Here is a 41-residue protein sequence, read N- to C-terminus: Large ribosomal subunit protein bL36 (41 aa).

This sequence belongs to the bacterial ribosomal protein bL36 family.

The protein is Large ribosomal subunit protein bL36 of Bradyrhizobium diazoefficiens (strain JCM 10833 / BCRC 13528 / IAM 13628 / NBRC 14792 / USDA 110).